Here is a 298-residue protein sequence, read N- to C-terminus: Protein REVEILLE 8 (298 aa).

The interval 1 to 44 is disordered; sequence MSSSPSRNPTNAEAPPPPPTSTDAVAEGSSKKVRKPYTITKSRE. Positions 38 to 92 constitute an HTH myb-type domain; sequence TITKSRESWTEEEHDKFLEALQLFDRDWKKIEDFVGSKTVIQIRSHAQKYFLKVQ. Residues 65-88 constitute a DNA-binding region (H-T-H motif); sequence WKKIEDFVGSKTVIQIRSHAQKYF. A disordered region spans residues 96 to 123; that stretch reads TLAHVPPPRPKRKAAHPYPQKASKNAQM.

The protein resides in the nucleus. Transcriptional activator of evening element (EE)-containing clock-controlled genes. Forms a negative feedback loop with APRR5. Regulates the pattern of histone H3 acetylation of the TOC1 promoter. RVE4, RVE6 and RVE8 are components of the circadian system acting synergistically to regulate flowering time, redundantly to regulate leaf growth, and antagonistically to regulate hypocotyl elongation; their action seems independent of ZTL and HY5. This is Protein REVEILLE 8 from Arabidopsis thaliana (Mouse-ear cress).